We begin with the raw amino-acid sequence, 396 residues long: Purine ribonucleoside efflux pump NepI (396 aa).

At 1-21 (MSEFIAENRGADAITRPNWSA) the chain is on the cytoplasmic side. The helical transmembrane segment at 22-42 (VFSVAFCVACLIIVEFLPVSL) threads the bilayer. Topologically, residues 43 to 54 (LTPMAQDLGISE) are periplasmic. A helical transmembrane segment spans residues 55 to 75 (GVAGQSVTVTAFVAMFASLFI). The Cytoplasmic portion of the chain corresponds to 76–85 (TQTIQATDRC). A helical membrane pass occupies residues 86 to 106 (YVVILFAVLLTLSCLLVSFAN). Position 107 (Ser107) is a topological domain, periplasmic. Residues 108–128 (FSLLLIGRACLGLALGGFWAM) traverse the membrane as a helical segment. The Cytoplasmic portion of the chain corresponds to 129-147 (SASLTMRLVPPRTVPKALS). The helical transmembrane segment at 148 to 168 (VIFGAVSIALVIAAPLGSFLG) threads the bilayer. At 169–175 (ELIGWRN) the chain is on the periplasmic side. The helical transmembrane segment at 176 to 196 (VFNAAAVMGVLCIFWIIKSLP) threads the bilayer. The Cytoplasmic segment spans residues 197 to 215 (SLPGEPSHQKQNTFRLLQR). A helical transmembrane segment spans residues 216–236 (PGVMAGMIAIFMSFAGQFAFF). At 237 to 255 (TYIRPVYMNLAGFGVDGLT) the chain is on the periplasmic side. The helical transmembrane segment at 256–276 (LVLLSFGIASFIGTSLSSFIL) threads the bilayer. At 277–281 (KRSVK) the chain is on the cytoplasmic side. The chain crosses the membrane as a helical span at residues 282 to 302 (LALAGAPLILAVSALVLTLWG). Topologically, residues 303-305 (SDK) are periplasmic. A helical transmembrane segment spans residues 306 to 326 (IVATGVAIIWGLTFALVPVGW). The Cytoplasmic segment spans residues 327–343 (STWITRSLADQAEKAGS). The chain crosses the membrane as a helical span at residues 344 to 364 (IQVAVIQLANTCGAAIGGYAL). Over 365–366 (DN) the chain is Periplasmic. Residues 367–387 (IGLTSPLMLSGTLMLLTALLV) form a helical membrane-spanning segment. Topologically, residues 388 to 396 (TAKVKMKKS) are cytoplasmic.

The protein belongs to the major facilitator superfamily. DHA1 family. NepI (TC 2.A.1.2.26) subfamily.

The protein resides in the cell inner membrane. The catalysed reaction is inosine(in) + H(+)(out) = inosine(out) + H(+)(in). It catalyses the reaction guanosine(in) + H(+)(out) = guanosine(out) + H(+)(in). Its function is as follows. Involved in the efflux of purine ribonucleosides, such as inosine and guanosine. The chain is Purine ribonucleoside efflux pump NepI from Shigella boydii serotype 4 (strain Sb227).